Consider the following 845-residue polypeptide: Beta-mannosidase B (845 aa).

Glutamate 432 serves as the catalytic Proton donor. Residues asparagine 717 and asparagine 723 are each glycosylated (N-linked (GlcNAc...) asparagine).

The protein belongs to the glycosyl hydrolase 2 family. Beta-mannosidase B subfamily.

The catalysed reaction is Hydrolysis of terminal, non-reducing beta-D-mannose residues in beta-D-mannosides.. It participates in glycan metabolism; N-glycan degradation. Functionally, exoglycosidase that cleaves the single beta-linked mannose residue from the non-reducing end of beta-mannosidic oligosaccharides of various complexity and length. Prefers mannobiose over mannotriose and has no activity against polymeric mannan. Is also severely restricted by galactosyl substitutions at the +1 subsite. The sequence is that of Beta-mannosidase B (mndB) from Aspergillus clavatus (strain ATCC 1007 / CBS 513.65 / DSM 816 / NCTC 3887 / NRRL 1 / QM 1276 / 107).